We begin with the raw amino-acid sequence, 658 residues long: UvrABC system protein C (658 aa).

One can recognise a GIY-YIG domain in the interval 62–140; it reads PKPGVYRMLD…IKRFRPPYNV (79 aa). Residues 250-285 form the UVR domain; that stretch reads GAVQREIEAQMHKAAEDLDFERAAMLRDRLRAATFI.

It belongs to the UvrC family. Interacts with UvrB in an incision complex.

It localises to the cytoplasm. The UvrABC repair system catalyzes the recognition and processing of DNA lesions. UvrC both incises the 5' and 3' sides of the lesion. The N-terminal half is responsible for the 3' incision and the C-terminal half is responsible for the 5' incision. This is UvrABC system protein C from Novosphingobium aromaticivorans (strain ATCC 700278 / DSM 12444 / CCUG 56034 / CIP 105152 / NBRC 16084 / F199).